The primary structure comprises 163 residues: Ribosome maturation factor RimM (163 aa).

The PRC barrel domain maps to 90–155 (VGEYYCKDLV…ADIDLNKKRL (66 aa)).

Belongs to the RimM family. In terms of assembly, binds ribosomal protein uS19.

It localises to the cytoplasm. An accessory protein needed during the final step in the assembly of 30S ribosomal subunit, possibly for assembly of the head region. Essential for efficient processing of 16S rRNA. May be needed both before and after RbfA during the maturation of 16S rRNA. It has affinity for free ribosomal 30S subunits but not for 70S ribosomes. This Neorickettsia sennetsu (strain ATCC VR-367 / Miyayama) (Ehrlichia sennetsu) protein is Ribosome maturation factor RimM.